A 179-amino-acid polypeptide reads, in one-letter code: Stathmin-2 (179 aa).

The membrane attachment stretch occupies residues 1–26 (MAKTAMAYKEKMKELSMLSLICSCFY). Ser16 carries the phosphoserine modification. Residues Cys22 and Cys24 are each lipidated (S-palmitoyl cysteine). One can recognise an SLD domain in the interval 38–179 (DDMEVKQINK…NKELQVELSG (142 aa)). Positions 39–96 (DMEVKQINKRASGQAFELILKPPSPISEAPRTLASPKKKDLSLEEIQKKLEAAEGRRK) are regulatory/phosphorylation domain. Ser50 carries the post-translational modification Phosphoserine. Ser62 and Ser73 each carry phosphoserine; by MAPK8. Residues 75–179 (KKKDLSLEEI…NKELQVELSG (105 aa)) adopt a coiled-coil conformation. Residues Ser80 and Ser97 each carry the phosphoserine modification.

This sequence belongs to the stathmin family. Interacts with ITM2C. Interacts with MAPK8. Interacts with KIFBP. Interacts (via the N-terminal region) with CIB1 (via C-terminal region); the interaction is direct, occurs in a calcium-dependent manner and attenuates the neurite outgrowth inhibition of STMN2. Sumoylated. Post-translationally, phosphorylated by MAPK9 and MAPK10 in the developing brain cortex. Phosphorylated mostly by MAPK8. In terms of processing, N-terminal palmitoylation promotes specific anchoring to the cytosolic leaflet of Golgi membranes and subsequent vesicular trafficking along dendrites and axons. Neuronal Stathmins are substrates for palmitoyltransferases ZDHHC3, ZDHHC7 and ZDHHC15. In terms of tissue distribution, expressed in neurons (at protein level). Present in growth cones and abundant in developing neurons.

It is found in the cytoplasm. The protein resides in the perinuclear region. Its subcellular location is the cell projection. The protein localises to the growth cone. It localises to the axon. It is found in the membrane. The protein resides in the golgi apparatus. Its subcellular location is the endosome. The protein localises to the lamellipodium. In terms of biological role, regulator of microtubule stability. When phosphorylated by MAPK8, stabilizes microtubules and consequently controls neurite length in cortical neurons. In the developing brain, negatively regulates the rate of exit from multipolar stage and retards radial migration from the ventricular zone. The sequence is that of Stathmin-2 (Stmn2) from Rattus norvegicus (Rat).